The sequence spans 274 residues: Large ribosomal subunit protein uL2cz/uL2cy (274 aa).

2 disordered regions span residues 1 to 33 and 223 to 265; these read MAIH…LIYG and MNPV…KYND.

It belongs to the universal ribosomal protein uL2 family. Part of the 50S ribosomal subunit.

The protein localises to the plastid. Its subcellular location is the chloroplast. The polypeptide is Large ribosomal subunit protein uL2cz/uL2cy (rpl2-A) (Pelargonium hortorum (Common geranium)).